Consider the following 649-residue polypeptide: DNA mismatch repair protein MutL (649 aa).

Belongs to the DNA mismatch repair MutL/HexB family.

Its function is as follows. This protein is involved in the repair of mismatches in DNA. It is required for dam-dependent methyl-directed DNA mismatch repair. May act as a 'molecular matchmaker', a protein that promotes the formation of a stable complex between two or more DNA-binding proteins in an ATP-dependent manner without itself being part of a final effector complex. This Streptococcus pneumoniae serotype 2 (strain D39 / NCTC 7466) protein is DNA mismatch repair protein MutL.